Reading from the N-terminus, the 266-residue chain is UPF0354 protein lmo1608 (266 aa).

It belongs to the UPF0354 family.

This Listeria monocytogenes serovar 1/2a (strain ATCC BAA-679 / EGD-e) protein is UPF0354 protein lmo1608.